The chain runs to 895 residues: Microsomal triglyceride transfer protein large subunit (895 aa).

An N-terminal signal peptide occupies residues 1–18 (MILLAVLFLCFFSSYSAS). One can recognise a Vitellogenin domain in the interval 28–659 (LNNERLYKLT…VFQYLGKAGL (632 aa)). Residues Cys174 and Cys194 are joined by a disulfide bond.

As to quaternary structure, heterodimer; heterodimerizes with the protein disulfide isomerase (P4HB/PDI). Interacts with APOB. Interacts with PRAP1.

The protein resides in the endoplasmic reticulum. Its subcellular location is the golgi apparatus. It carries out the reaction a 1,2-diacyl-sn-glycero-3-phosphocholine(in) = a 1,2-diacyl-sn-glycero-3-phosphocholine(out). It catalyses the reaction a 1,2-diacyl-sn-glycero-3-phosphoethanolamine(in) = a 1,2-diacyl-sn-glycero-3-phosphoethanolamine(out). The catalysed reaction is a cholesterol ester(in) = a cholesterol ester(out). The enzyme catalyses a triacyl-sn-glycerol(in) = a triacyl-sn-glycerol(out). In terms of biological role, catalyzes the transport of triglyceride, cholesteryl ester, and phospholipid between phospholipid surfaces. Required for the assembly and secretion of plasma lipoproteins that contain apolipoprotein B. May be involved in regulating cholesteryl ester biosynthesis in cells that produce lipoproteins. The polypeptide is Microsomal triglyceride transfer protein large subunit (MTTP) (Mesocricetus auratus (Golden hamster)).